A 265-amino-acid chain; its full sequence is Glutamate racemase (265 aa).

Residues 9–10 (DS) and 41–42 (YS) each bind substrate. Residue C73 is the Proton donor/acceptor of the active site. Residue 74-75 (NT) participates in substrate binding. C184 serves as the catalytic Proton donor/acceptor. Position 185–186 (185–186 (TH)) interacts with substrate.

It belongs to the aspartate/glutamate racemases family.

It catalyses the reaction L-glutamate = D-glutamate. It functions in the pathway cell wall biogenesis; peptidoglycan biosynthesis. In terms of biological role, provides the (R)-glutamate required for cell wall biosynthesis. The sequence is that of Glutamate racemase from Actinobacillus pleuropneumoniae serotype 5b (strain L20).